We begin with the raw amino-acid sequence, 251 residues long: DNA repair protein RecO (251 aa).

This sequence belongs to the RecO family.

Functionally, involved in DNA repair and RecF pathway recombination. This is DNA repair protein RecO from Albidiferax ferrireducens (strain ATCC BAA-621 / DSM 15236 / T118) (Rhodoferax ferrireducens).